We begin with the raw amino-acid sequence, 274 residues long: Large ribosomal subunit protein uL2 (274 aa).

The tract at residues 223 to 274 is disordered; sequence VAMNPVDHPHGGGEGRTSGGRHPVTPWGVPTKGYKTRSNKRTDKYIVRRRNK.

This sequence belongs to the universal ribosomal protein uL2 family. Part of the 50S ribosomal subunit. Forms a bridge to the 30S subunit in the 70S ribosome.

Functionally, one of the primary rRNA binding proteins. Required for association of the 30S and 50S subunits to form the 70S ribosome, for tRNA binding and peptide bond formation. It has been suggested to have peptidyltransferase activity; this is somewhat controversial. Makes several contacts with the 16S rRNA in the 70S ribosome. This Shewanella oneidensis (strain ATCC 700550 / JCM 31522 / CIP 106686 / LMG 19005 / NCIMB 14063 / MR-1) protein is Large ribosomal subunit protein uL2.